A 417-amino-acid chain; its full sequence is Divinyl chlorophyllide a 8-vinyl-reductase, chloroplastic (417 aa).

The transit peptide at 1-49 (MSLCSSFNVFASYSPKPKTIFKDSKFISQFQVKSSPLASTFHTNESSTS) directs the protein to the chloroplast.

Highly expressed in leaves, stems and flower buds. Detected in roots.

It is found in the plastid. Its subcellular location is the chloroplast. It catalyses the reaction protochlorophyllide a + NADP(+) = 3,8-divinyl protochlorophyllide a + NADPH + H(+). Its pathway is porphyrin-containing compound metabolism; chlorophyll biosynthesis. Its function is as follows. Catalyzes the conversion of divinyl chlorophyllide to monovinyl chlorophyllide. Reduces the 8-vinyl group of the tetrapyrrole to an ethyl group using NADPH as the reductant. The best substrate is (3,8-divinyl)-chlorophyllide a (DV-Chlidea). Very low activity with (3,8-divinyl)-protochlorophyllide a (DV-Pchlidea) and (3,8-divinyl)-magnesium-protoporphyrin IX monomethyl ester (DV-MPE). No activity with (3,8-divinyl)-chlorophyllide b (DV-Chlideb), (3,8-divinyl)-magnesium-protoporphyrin IX (DV-Mg-Proto) and either (3,8-divinyl)-chlorophyll a (DV-Chla) or b (DV-Chlb). The chain is Divinyl chlorophyllide a 8-vinyl-reductase, chloroplastic (DVR) from Arabidopsis thaliana (Mouse-ear cress).